The primary structure comprises 510 residues: Glutamate decarboxylase (510 aa).

Residue 107–109 (QLS) participates in substrate binding. Lys322 bears the N6-(pyridoxal phosphate)lysine mark. Position 483 (Arg483) interacts with substrate.

The protein belongs to the group II decarboxylase family. As to quaternary structure, homodimer. The cofactor is pyridoxal 5'-phosphate. In terms of tissue distribution, expressed in the head (at protein level).

The enzyme catalyses L-glutamate + H(+) = 4-aminobutanoate + CO2. Catalyzes the production of GABA. The protein is Glutamate decarboxylase (Gad1) of Drosophila melanogaster (Fruit fly).